Reading from the N-terminus, the 440-residue chain is Homocitrate synthase, mitochondrial (440 aa).

Over residues 1 to 23 the composition is skewed to polar residues; it reads MSENNEFQSVTESTTAPTTSNPY. The disordered stretch occupies residues 1-27; that stretch reads MSENNEFQSVTESTTAPTTSNPYGPNP. A Pyruvate carboxyltransferase domain is found at 37–290; that stretch reads FQLIDSTLRE…RSKYKLHKIR (254 aa). Arginine 45 is a binding site for 2-oxoglutarate. Residue glutamate 46 participates in Mg(2+) binding. The 2-oxoglutarate site is built by histidine 105, arginine 165, and threonine 199. The Mg(2+) site is built by histidine 226 and histidine 228. The Proton acceptor role is filled by histidine 323. Position 399 is a phosphoserine (serine 399). Threonine 410 is modified (phosphothreonine).

Belongs to the alpha-IPM synthase/homocitrate synthase family. Homocitrate synthase LYS20/LYS21 subfamily. Mg(2+) serves as cofactor. Mn(2+) is required as a cofactor.

Its subcellular location is the mitochondrion. The enzyme catalyses acetyl-CoA + 2-oxoglutarate + H2O = (2R)-homocitrate + CoA + H(+). It participates in amino-acid biosynthesis; L-lysine biosynthesis via AAA pathway; L-alpha-aminoadipate from 2-oxoglutarate: step 1/5. Functionally, catalyzes the aldol-type condensation of 2-oxoglutarate with acetyl-CoA to yield homocitrate. Carries out the first step of the alpha-aminoadipate (AAA) lysine biosynthesis pathway. The protein is Homocitrate synthase, mitochondrial (LYS21) of Saccharomyces cerevisiae (strain ATCC 204508 / S288c) (Baker's yeast).